The following is a 424-amino-acid chain: NuA4 complex subunit EAF3 homolog (424 aa).

In terms of domain architecture, Tudor-knot spans 23-73 (VDGERVLCFHGPLIYEAKVLKTKPDATPVEYYIHYAGWSKNWDEWVPENRV). The interval 88–243 (ARQCGERSKK…STPTTEPAPC (156 aa)) is disordered. Residues 97–106 (KDNKKGSAKA) show a composition bias toward basic residues. Over residues 107-116 (KKMEQMRNES) the composition is skewed to basic and acidic residues. Residue serine 119 is modified to Phosphoserine. The span at 122 to 165 (SKDSNTSQSTASSTPTTSAGPGSKSEAGSTGTTTTNSTANSTTS) shows a compositional bias: low complexity. Phosphothreonine occurs at positions 175, 183, 196, and 197. At serine 211 the chain carries Phosphoserine. The segment covering 232–242 (TPSTPTTEPAP) has biased composition (low complexity). Threonine 235 carries the phosphothreonine modification. The 173-residue stretch at 252–424 (AKVEVKIKIP…VDPEYVRNAQ (173 aa)) folds into the MRG domain.

Component of the Tip60 chromatin-remodeling complex which contains the catalytic subunit Tip60 and the subunits Domino, Tra1, Brd8, E(Pc), DMAP1, Pontin, Reptin, Ing3, Act87E, BAP55, Mrg15, MrgBP, Gas41 and YL-1.

Its subcellular location is the nucleus. Functionally, part of the Tip60 chromatin-remodeling complex which is involved in DNA repair. Upon induction of DNA double-strand breaks, this complex acetylates phosphorylated H2AV in nucleosomes and exchanges it with unmodified H2AV. In Drosophila melanogaster (Fruit fly), this protein is NuA4 complex subunit EAF3 homolog (MRG15).